The chain runs to 283 residues: Plasma membrane ascorbate-dependent reductase CYBRD1 (283 aa).

Over 1-5 the chain is Cytoplasmic; sequence MEGYK. Residues 6 to 30 form a helical membrane-spanning segment; the sequence is SFLAFLVSSLLLGFLGVIFTLVWVL. The region spanning 13–218 is the Cytochrome b561 domain; the sequence is SSLLLGFLGV…FGGLVVWMVT (206 aa). Residues 31–45 are Extracellular-facing; the sequence is HWREGLGWDGGAAEF. The helical transmembrane segment at 46-67 threads the bilayer; the sequence is NWHPVLVTSGFIFIQGIAIIVY. His-48, Arg-68, and Lys-77 together coordinate heme b. Topologically, residues 68 to 76 are cytoplasmic; it reads RLPWTWKCS. Lys-77 and Lys-81 together coordinate L-ascorbate. The chain crosses the membrane as a helical span at residues 77–103; that stretch reads KLLMKFIHAGLHLTALIFTIVALVAVF. His-84 serves as a coordination point for heme b. Residues 104-116 lie on the Extracellular side of the membrane; it reads DFHNAKNIPNMYS. Residue His-106 coordinates Fe(3+). Residues 113 to 116 and His-118 contribute to the heme b site; that span reads NMYS. A helical transmembrane segment spans residues 117-142; that stretch reads LHSWIGLTVVILYALQLVLGVSIYLL. Topologically, residues 143-149 are cytoplasmic; it reads PFASNTL. L-ascorbate is bound at residue Arg-150. Residues 150-177 form a helical membrane-spanning segment; the sequence is RAALMPVHVYSGLFIFGTVIATALMGIT. 2 residues coordinate heme b: His-157 and Glu-178. Over 178 to 195 the chain is Extracellular; it reads EKLIFSLKEPPYSKLPPE. Residues 196 to 220 form a helical membrane-spanning segment; that stretch reads AIFVNTFGLLILVFGGLVVWMVTTP. The Cytoplasmic portion of the chain corresponds to 221–283; it reads AWKRPREQGM…LDEAGQRSTM (63 aa). A heme b-binding site is contributed by Lys-223. Residues 234–262 form a disordered region; that stretch reads SPTVSSPDETEEGSTITDCSNTEKSDVEL. Over residues 235–253 the composition is skewed to polar residues; that stretch reads PTVSSPDETEEGSTITDCS.

In terms of assembly, homodimer. Heme b serves as cofactor.

It is found in the cell membrane. It localises to the apical cell membrane. The catalysed reaction is Fe(3+)(out) + L-ascorbate(in) = monodehydro-L-ascorbate radical(in) + Fe(2+)(out) + H(+). It carries out the reaction Cu(2+)(out) + L-ascorbate(in) = Cu(+)(out) + monodehydro-L-ascorbate radical(in) + H(+). It catalyses the reaction monodehydro-L-ascorbate radical(out) + L-ascorbate(in) = monodehydro-L-ascorbate radical(in) + L-ascorbate(out). In terms of biological role, plasma membrane reductase that uses cytoplasmic ascorbate as an electron donor to reduce extracellular Fe(3+) into Fe(2+). It is also able to reduce extracellular monodehydro-L-ascorbate and may be involved in extracellular ascorbate regeneration. May also function as a cupric transmembrane reductase. The sequence is that of Plasma membrane ascorbate-dependent reductase CYBRD1 (cybrd1) from Xenopus laevis (African clawed frog).